The following is a 93-amino-acid chain: Pyrimidine/purine nucleoside phosphorylase (93 aa).

Belongs to the nucleoside phosphorylase PpnP family.

The enzyme catalyses a purine D-ribonucleoside + phosphate = a purine nucleobase + alpha-D-ribose 1-phosphate. The catalysed reaction is adenosine + phosphate = alpha-D-ribose 1-phosphate + adenine. It carries out the reaction cytidine + phosphate = cytosine + alpha-D-ribose 1-phosphate. It catalyses the reaction guanosine + phosphate = alpha-D-ribose 1-phosphate + guanine. The enzyme catalyses inosine + phosphate = alpha-D-ribose 1-phosphate + hypoxanthine. The catalysed reaction is thymidine + phosphate = 2-deoxy-alpha-D-ribose 1-phosphate + thymine. It carries out the reaction uridine + phosphate = alpha-D-ribose 1-phosphate + uracil. It catalyses the reaction xanthosine + phosphate = alpha-D-ribose 1-phosphate + xanthine. In terms of biological role, catalyzes the phosphorolysis of diverse nucleosides, yielding D-ribose 1-phosphate and the respective free bases. Can use uridine, adenosine, guanosine, cytidine, thymidine, inosine and xanthosine as substrates. Also catalyzes the reverse reactions. The sequence is that of Pyrimidine/purine nucleoside phosphorylase from Shewanella halifaxensis (strain HAW-EB4).